A 400-amino-acid polypeptide reads, in one-letter code: Enoyl-[acyl-carrier-protein] reductase [NADH] (400 aa).

Residues 48–53 (GSSSGY), 74–75 (FE), 111–112 (DA), and 139–140 (LA) each bind NAD(+). Y225 serves as a coordination point for substrate. The Proton donor role is filled by Y235. Residues K244 and 273 to 275 (VVT) each bind NAD(+).

This sequence belongs to the TER reductase family. Monomer.

The enzyme catalyses a 2,3-saturated acyl-[ACP] + NAD(+) = a (2E)-enoyl-[ACP] + NADH + H(+). It participates in lipid metabolism; fatty acid biosynthesis. Involved in the final reduction of the elongation cycle of fatty acid synthesis (FAS II). Catalyzes the reduction of a carbon-carbon double bond in an enoyl moiety that is covalently linked to an acyl carrier protein (ACP). This chain is Enoyl-[acyl-carrier-protein] reductase [NADH], found in Shewanella baltica (strain OS223).